Consider the following 232-residue polypeptide: Ion-translocating oxidoreductase complex subunit E (232 aa).

6 helical membrane-spanning segments follow: residues 18–38 (GLVQLLGLCPLLAVTATLTNA), 39–59 (LGLGVATMLVLIGSNILVSLV), 69–89 (IPVFVMIIAALVTAVQLLINA), 93–113 (GLYLSLGIFLPLIVTNCIIIG), 127–147 (AAFDGLMMGLGFTLVLAVLGA), and 182–202 (PFLLAMLPPGAFIVMGLLIAL).

The protein belongs to the NqrDE/RnfAE family. In terms of assembly, the complex is composed of six subunits: RnfA, RnfB, RnfC, RnfD, RnfE and RnfG.

It is found in the cell inner membrane. Part of a membrane-bound complex that couples electron transfer with translocation of ions across the membrane. The polypeptide is Ion-translocating oxidoreductase complex subunit E (Shewanella sp. (strain ANA-3)).